A 503-amino-acid polypeptide reads, in one-letter code: Aromatase (503 aa).

The chain crosses the membrane as a helical span at residues 21-41 (VTVSAMPLLLIMGLLLLIWNC). Substrate is bound by residues Asp-309 and Met-374. Cys-437 contacts heme.

This sequence belongs to the cytochrome P450 family. The cofactor is heme.

It localises to the endoplasmic reticulum membrane. The protein localises to the microsome membrane. It catalyses the reaction testosterone + 3 reduced [NADPH--hemoprotein reductase] + 3 O2 = 17beta-estradiol + formate + 3 oxidized [NADPH--hemoprotein reductase] + 4 H2O + 4 H(+). The enzyme catalyses androst-4-ene-3,17-dione + 3 reduced [NADPH--hemoprotein reductase] + 3 O2 = estrone + formate + 3 oxidized [NADPH--hemoprotein reductase] + 4 H2O + 4 H(+). It carries out the reaction androst-4-ene-3,17-dione + reduced [NADPH--hemoprotein reductase] + O2 = 19-hydroxyandrost-4-ene-3,17-dione + oxidized [NADPH--hemoprotein reductase] + H2O + H(+). The catalysed reaction is 19-hydroxyandrost-4-ene-3,17-dione + reduced [NADPH--hemoprotein reductase] + O2 = 19-oxo-androst-4-ene-3,17-dione + oxidized [NADPH--hemoprotein reductase] + 2 H2O + H(+). It catalyses the reaction 19-oxo-androst-4-ene-3,17-dione + reduced [NADPH--hemoprotein reductase] + O2 = estrone + formate + oxidized [NADPH--hemoprotein reductase] + H2O + 2 H(+). The enzyme catalyses estrone + reduced [NADPH--hemoprotein reductase] + O2 = 2-hydroxyestrone + oxidized [NADPH--hemoprotein reductase] + H2O + H(+). It carries out the reaction 17beta-hydroxy-5alpha-androstan-3-one + reduced [NADPH--hemoprotein reductase] + O2 = 17beta,19-dihydroxy-3-oxo-5alpha-androstanone + oxidized [NADPH--hemoprotein reductase] + H2O + H(+). The catalysed reaction is 17beta,19-dihydroxy-3-oxo-5alpha-androstanone + reduced [NADPH--hemoprotein reductase] + O2 = 17beta-hydroxy-3,19-dioxo-5alpha-androstanone + oxidized [NADPH--hemoprotein reductase] + 2 H2O + H(+). It catalyses the reaction 17beta-hydroxy-3,19-dioxo-5alpha-androstanone + reduced [NADPH--hemoprotein reductase] + O2 = 17beta-hydroxy-3-oxo-19-nor-5alpha-androst-1-ene + formate + oxidized [NADPH--hemoprotein reductase] + H2O + 2 H(+). Its pathway is steroid hormone biosynthesis. A cytochrome P450 monooxygenase that catalyzes the conversion of C19 androgens, androst-4-ene-3,17-dione (androstenedione) and testosterone to the C18 estrogens, estrone and estradiol, respectively. Catalyzes three successive oxidations of C19 androgens: two conventional oxidations at C19 yielding 19-hydroxy and 19-oxo/19-aldehyde derivatives, followed by a third oxidative aromatization step that involves C1-beta hydrogen abstraction combined with cleavage of the C10-C19 bond to yield a phenolic A ring and formic acid. Alternatively, the third oxidative reaction yields a 19-norsteroid and formic acid. Converts dihydrotestosterone to delta1,10-dehydro 19-nordihydrotestosterone and may play a role in homeostasis of this potent androgen. Also displays 2-hydroxylase activity toward estrone. Mechanistically, uses molecular oxygen inserting one oxygen atom into a substrate, and reducing the second into a water molecule, with two electrons provided by NADPH via cytochrome P450 reductase (CPR; NADPH-ferrihemoprotein reductase). The protein is Aromatase (Cyp19a1) of Mus musculus (Mouse).